The primary structure comprises 392 residues: Small ribosomal subunit protein bS1 (392 aa).

S1 motif domains lie at 16-90 (GDKV…LSKR), 108-173 (DEII…LSRK), 194-262 (GDVI…LSIK), and 279-348 (DDVI…LSIK).

This sequence belongs to the bacterial ribosomal protein bS1 family.

Functionally, binds mRNA; thus facilitating recognition of the initiation point. It is needed to translate mRNA with a short Shine-Dalgarno (SD) purine-rich sequence. In Staphylococcus haemolyticus (strain JCSC1435), this protein is Small ribosomal subunit protein bS1 (rpsA).